The primary structure comprises 562 residues: Potassium-transporting ATPase potassium-binding subunit (562 aa).

Transmembrane regions (helical) follow at residues F6–F26, Y62–M82, G132–I152, L175–L195, F253–V273, L283–L303, F327–V347, A356–V376, G379–G399, M416–L436, L483–I503, and L526–A546.

The protein belongs to the KdpA family. The system is composed of three essential subunits: KdpA, KdpB and KdpC.

Its subcellular location is the cell inner membrane. Its function is as follows. Part of the high-affinity ATP-driven potassium transport (or Kdp) system, which catalyzes the hydrolysis of ATP coupled with the electrogenic transport of potassium into the cytoplasm. This subunit binds the periplasmic potassium ions and delivers the ions to the membrane domain of KdpB through an intramembrane tunnel. This is Potassium-transporting ATPase potassium-binding subunit from Yersinia pseudotuberculosis serotype I (strain IP32953).